Reading from the N-terminus, the 428-residue chain is Protein CLP1 homolog (428 aa).

Residues Glu22, Lys63, and Asp127 to Thr132 contribute to the ATP site.

This sequence belongs to the Clp1 family. Clp1 subfamily.

Its subcellular location is the nucleus. Functionally, required for endonucleolytic cleavage during polyadenylation-dependent pre-mRNA 3'-end formation. In Nematostella vectensis (Starlet sea anemone), this protein is Protein CLP1 homolog.